A 389-amino-acid chain; its full sequence is Dual-specificity RNA methyltransferase RlmN (389 aa).

Residue Glu-94 is the Proton acceptor of the active site. Positions 134 to 367 (PRVRVTQCIS…CFVRRRRGDD (234 aa)) constitute a Radical SAM core domain. Residues Cys-141 and Cys-372 are joined by a disulfide bond. [4Fe-4S] cluster is bound by residues Cys-148, Cys-152, and Cys-155. Residues 197 to 198 (GE), Ser-229, 253 to 255 (SLH), and Asn-329 each bind S-adenosyl-L-methionine. Residue Cys-372 is the S-methylcysteine intermediate of the active site.

The protein belongs to the radical SAM superfamily. RlmN family. [4Fe-4S] cluster is required as a cofactor.

The protein resides in the cytoplasm. The enzyme catalyses adenosine(2503) in 23S rRNA + 2 reduced [2Fe-2S]-[ferredoxin] + 2 S-adenosyl-L-methionine = 2-methyladenosine(2503) in 23S rRNA + 5'-deoxyadenosine + L-methionine + 2 oxidized [2Fe-2S]-[ferredoxin] + S-adenosyl-L-homocysteine. It carries out the reaction adenosine(37) in tRNA + 2 reduced [2Fe-2S]-[ferredoxin] + 2 S-adenosyl-L-methionine = 2-methyladenosine(37) in tRNA + 5'-deoxyadenosine + L-methionine + 2 oxidized [2Fe-2S]-[ferredoxin] + S-adenosyl-L-homocysteine. Specifically methylates position 2 of adenine 2503 in 23S rRNA and position 2 of adenine 37 in tRNAs. m2A2503 modification seems to play a crucial role in the proofreading step occurring at the peptidyl transferase center and thus would serve to optimize ribosomal fidelity. This Sorangium cellulosum (strain So ce56) (Polyangium cellulosum (strain So ce56)) protein is Dual-specificity RNA methyltransferase RlmN.